We begin with the raw amino-acid sequence, 86 residues long: U22-theraphotoxin-Cg1a (86 aa).

Residues 1–20 form the signal peptide; the sequence is MKVSVVLAITVLALLSVAYA. The propeptide occupies 21 to 51; that stretch reads SEFEEKELVKEVVRTIFLGKEDAALREETDR. 3 cysteine pairs are disulfide-bonded: C53–C67, C60–C72, and C66–C79. At F85 the chain carries Phenylalanine amide.

Belongs to the neurotoxin 10 (Hwtx-1) family. 42 (Jztx-44) subfamily. Expressed by the venom gland.

It is found in the secreted. Functionally, probable ion channel inhibitor. The chain is U22-theraphotoxin-Cg1a from Chilobrachys guangxiensis (Chinese earth tiger tarantula).